An 895-amino-acid polypeptide reads, in one-letter code: Zinc finger protein 574 (895 aa).

3 consecutive C2H2-type zinc fingers follow at residues 16–38 (YVCS…QNSH), 76–98 (YQCL…QELH), and 126–148 (YECV…RQTH). Ser-164 is subject to Phosphoserine. The C2H2-type 4 zinc finger occupies 214–236 (YKCSECSQLFQLPADFLEHQATH). The disordered stretch occupies residues 239–301 (APVPESQEPA…RARRNNSGEA (63 aa)). Residues 247–257 (PALQQEVQASS) show a composition bias toward polar residues. The segment covering 274–287 (HSYELRNGEAIGRD) has biased composition (basic and acidic residues). Ser-298 bears the Phosphoserine mark. 4 C2H2-type zinc fingers span residues 309 to 331 (LFCS…LRSH), 336 to 358 (FKCP…LGDH), 364 to 386 (FLCV…RRAH), and 392 to 413 (HSCP…RRTH). The segment at 434–460 (FPEPAPAETGEPEAPEPPVSEETSAGP) is disordered. C2H2-type zinc fingers lie at residues 466 to 489 (YRCL…RFVH), 495 to 517 (HKCS…LRTH), 523 to 545 (FPCP…RLTH), 551 to 573 (YRCG…RLVH), 579 to 601 (YRCQ…RYHH), and 607 to 630 (YKCR…LVVH). The C2H2-type 15; degenerate zinc-finger motif lies at 636-659 (HRCPSCGAAFPSSLRLREHRCAAA). A C2H2-type 16 zinc finger spans residues 667 to 689 (FECGTCGKKVGSAARLQAHEAAH). The disordered stretch occupies residues 687–732 (AAHAAAGPGEVLAKEPPAPRAPRATRAPVASPAALGGTATASPAPA). Residues 707-731 (APRATRAPVASPAALGGTATASPAP) show a composition bias toward low complexity. Ser-717 bears the Phosphoserine mark. Thr-724 carries the post-translational modification Phosphothreonine. The residue at position 728 (Ser-728) is a Phosphoserine. C2H2-type zinc fingers lie at residues 737–759 (LECS…RRIH), 765–787 (YPCP…RRLH), 793–815 (FACE…RRIH), and 821–843 (YSCP…RKTH). Arg-831 bears the Asymmetric dimethylarginine mark.

Belongs to the krueppel C2H2-type zinc-finger protein family.

The protein resides in the nucleus. Its function is as follows. May be involved in transcriptional regulation. The protein is Zinc finger protein 574 (ZNF574) of Pongo abelii (Sumatran orangutan).